We begin with the raw amino-acid sequence, 193 residues long: dCTP deaminase, dUMP-forming (193 aa).

Residues R107–R112, D125, T133–E135, Q154, and Y168 each bind dCTP. E135 (proton donor/acceptor) is an active-site residue. The interval A169–G193 is disordered. The segment covering G173–G193 has biased composition (basic and acidic residues).

Belongs to the dCTP deaminase family. As to quaternary structure, homotrimer.

The enzyme catalyses dCTP + 2 H2O = dUMP + NH4(+) + diphosphate. It participates in pyrimidine metabolism; dUMP biosynthesis; dUMP from dCTP: step 1/1. Functionally, bifunctional enzyme that catalyzes both the deamination of dCTP to dUTP and the hydrolysis of dUTP to dUMP without releasing the toxic dUTP intermediate. The polypeptide is dCTP deaminase, dUMP-forming (Methanopyrus kandleri (strain AV19 / DSM 6324 / JCM 9639 / NBRC 100938)).